Reading from the N-terminus, the 138-residue chain is Acidic phospholipase A2 6 (138 aa).

The N-terminal stretch at 1–16 (MRTLWIMAVLLVGVEG) is a signal peptide. Disulfide bonds link Cys-42-Cys-131, Cys-44-Cys-60, Cys-59-Cys-111, Cys-65-Cys-138, Cys-66-Cys-104, Cys-73-Cys-97, and Cys-91-Cys-102. Positions 43, 45, and 47 each coordinate Ca(2+). The active site involves His-63. Asp-64 contributes to the Ca(2+) binding site. The active site involves Asp-105.

Belongs to the phospholipase A2 family. Group II subfamily. D49 sub-subfamily. In terms of assembly, homodimer. Ca(2+) is required as a cofactor. In terms of tissue distribution, expressed by the venom gland.

Its subcellular location is the secreted. The enzyme catalyses a 1,2-diacyl-sn-glycero-3-phosphocholine + H2O = a 1-acyl-sn-glycero-3-phosphocholine + a fatty acid + H(+). Snake venom phospholipase A2 (PLA2) that has high lipolytic activity. PLA2 catalyzes the calcium-dependent hydrolysis of the 2-acyl groups in 3-sn-phosphoglycerides. This is Acidic phospholipase A2 6 from Craspedocephalus gramineus (Bamboo pit viper).